Consider the following 465-residue polypeptide: Cysteine--tRNA ligase (465 aa).

Zn(2+) is bound at residue cysteine 27. The short motif at 29–39 (PTVYNFFHIGN) is the 'HIGH' region element. Cysteine 207, histidine 232, and glutamate 236 together coordinate Zn(2+). The 'KMSKS' region signature appears at 264–268 (KMSKS). Lysine 267 serves as a coordination point for ATP.

The protein belongs to the class-I aminoacyl-tRNA synthetase family. As to quaternary structure, monomer. Requires Zn(2+) as cofactor.

Its subcellular location is the cytoplasm. It catalyses the reaction tRNA(Cys) + L-cysteine + ATP = L-cysteinyl-tRNA(Cys) + AMP + diphosphate. The chain is Cysteine--tRNA ligase from Clostridium botulinum (strain ATCC 19397 / Type A).